Reading from the N-terminus, the 437-residue chain is Trigger factor (437 aa).

A PPIase FKBP-type domain is found at Asp161–Pro246.

This sequence belongs to the FKBP-type PPIase family. Tig subfamily.

The protein localises to the cytoplasm. It carries out the reaction [protein]-peptidylproline (omega=180) = [protein]-peptidylproline (omega=0). Its function is as follows. Involved in protein export. Acts as a chaperone by maintaining the newly synthesized protein in an open conformation. Functions as a peptidyl-prolyl cis-trans isomerase. This is Trigger factor from Pseudomonas putida (strain ATCC 700007 / DSM 6899 / JCM 31910 / BCRC 17059 / LMG 24140 / F1).